Reading from the N-terminus, the 372-residue chain is Pre-small/secreted glycoprotein (372 aa).

Positions 1-32 (MEGLSLLQLPRDKFRKSSFFVWVIILFQKAFS) are cleaved as a signal peptide. An N-linked (GlcNAc...) asparagine; by host glycan is attached at Asn-40. Cystine bridges form between Cys-108-Cys-135 and Cys-121-Cys-147. Asn-204, Asn-208, Asn-238, Asn-257, and Asn-268 each carry an N-linked (GlcNAc...) asparagine; by host glycan. The interval 320–340 (MRHRRELQREESPTGPPGSIR) is disordered.

It belongs to the filoviruses glycoprotein family. Homodimer; disulfide-linked. The homodimers are linked by two disulfide bonds in a parallel orientation. As to quaternary structure, monomer. In terms of processing, this precursor is processed into mature sGP and delta-peptide by host furin or furin-like proteases. The cleavage site corresponds to the furin optimal cleavage sequence [KR]-X-[KR]-R. Post-translationally, N-glycosylated. O-glycosylated.

It is found in the secreted. Functionally, seems to possess an anti-inflammatory activity as it can reverse the barrier-decreasing effects of TNF alpha. Might therefore contribute to the lack of inflammatory reaction seen during infection in spite the of extensive necrosis and massive virus production. Does not seem to be involved in activation of primary macrophages. Does not seem to interact specifically with neutrophils. Viroporin that permeabilizes mammalian cell plasma membranes. It acts by altering permeation of ionic compounds and small molecules. This activity may lead to viral enterotoxic activity. In Sudan ebolavirus (strain Boniface-76) (SEBOV), this protein is Pre-small/secreted glycoprotein (GP).